The primary structure comprises 136 residues: Large ribosomal subunit protein uL16 (136 aa).

The protein belongs to the universal ribosomal protein uL16 family. In terms of assembly, part of the 50S ribosomal subunit.

Binds 23S rRNA and is also seen to make contacts with the A and possibly P site tRNAs. The polypeptide is Large ribosomal subunit protein uL16 (Orientia tsutsugamushi (strain Ikeda) (Rickettsia tsutsugamushi)).